The following is a 638-amino-acid chain: Phosphomethylpyrimidine synthase (638 aa).

Residues N235, M264, Y293, H329, 349–351 (SRG), 390–393 (DGLR), and E429 contribute to the substrate site. Residue H433 participates in Zn(2+) binding. Residue Y456 coordinates substrate. H497 is a Zn(2+) binding site. [4Fe-4S] cluster-binding residues include C577, C580, and C585.

Belongs to the ThiC family. As to quaternary structure, homodimer. Requires [4Fe-4S] cluster as cofactor.

The enzyme catalyses 5-amino-1-(5-phospho-beta-D-ribosyl)imidazole + S-adenosyl-L-methionine = 4-amino-2-methyl-5-(phosphooxymethyl)pyrimidine + CO + 5'-deoxyadenosine + formate + L-methionine + 3 H(+). Its pathway is cofactor biosynthesis; thiamine diphosphate biosynthesis. Its function is as follows. Catalyzes the synthesis of the hydroxymethylpyrimidine phosphate (HMP-P) moiety of thiamine from aminoimidazole ribotide (AIR) in a radical S-adenosyl-L-methionine (SAM)-dependent reaction. This is Phosphomethylpyrimidine synthase from Polaromonas naphthalenivorans (strain CJ2).